The chain runs to 1034 residues: Glycine dehydrogenase (decarboxylating) B, mitochondrial (1034 aa).

A mitochondrion-targeting transit peptide spans 1-63 (MERARRLAIL…LNGFGSQVRT (63 aa)). Lysine 770 carries the post-translational modification N6-(pyridoxal phosphate)lysine.

The protein belongs to the GcvP family. Homodimer. The glycine cleavage system is composed of four proteins: P, T, L and H. Pyridoxal 5'-phosphate is required as a cofactor.

The protein localises to the mitochondrion. The enzyme catalyses N(6)-[(R)-lipoyl]-L-lysyl-[glycine-cleavage complex H protein] + glycine + H(+) = N(6)-[(R)-S(8)-aminomethyldihydrolipoyl]-L-lysyl-[glycine-cleavage complex H protein] + CO2. The glycine cleavage system catalyzes the degradation of glycine. The P protein binds the alpha-amino group of glycine through its pyridoxal phosphate cofactor; CO(2) is released and the remaining methylamine moiety is then transferred to the lipoamide cofactor of the H protein. In Flaveria pringlei, this protein is Glycine dehydrogenase (decarboxylating) B, mitochondrial (GDCSPB).